The following is a 314-amino-acid chain: Lipoyl synthase (314 aa).

Residues Cys-61, Cys-66, Cys-72, Cys-87, Cys-91, Cys-94, and Ser-301 each contribute to the [4Fe-4S] cluster site. The Radical SAM core domain maps to 73–290 (FGRGTATFMI…EEEAKKMGFS (218 aa)).

This sequence belongs to the radical SAM superfamily. Lipoyl synthase family. The cofactor is [4Fe-4S] cluster.

The protein resides in the cytoplasm. It catalyses the reaction [[Fe-S] cluster scaffold protein carrying a second [4Fe-4S](2+) cluster] + N(6)-octanoyl-L-lysyl-[protein] + 2 oxidized [2Fe-2S]-[ferredoxin] + 2 S-adenosyl-L-methionine + 4 H(+) = [[Fe-S] cluster scaffold protein] + N(6)-[(R)-dihydrolipoyl]-L-lysyl-[protein] + 4 Fe(3+) + 2 hydrogen sulfide + 2 5'-deoxyadenosine + 2 L-methionine + 2 reduced [2Fe-2S]-[ferredoxin]. It participates in protein modification; protein lipoylation via endogenous pathway; protein N(6)-(lipoyl)lysine from octanoyl-[acyl-carrier-protein]: step 2/2. Catalyzes the radical-mediated insertion of two sulfur atoms into the C-6 and C-8 positions of the octanoyl moiety bound to the lipoyl domains of lipoate-dependent enzymes, thereby converting the octanoylated domains into lipoylated derivatives. The chain is Lipoyl synthase from Dechloromonas aromatica (strain RCB).